The chain runs to 215 residues: Thymidylate kinase (215 aa).

Residue 10–17 coordinates ATP; sequence GGEGVGKT.

Belongs to the thymidylate kinase family.

The catalysed reaction is dTMP + ATP = dTDP + ADP. In terms of biological role, phosphorylation of dTMP to form dTDP in both de novo and salvage pathways of dTTP synthesis. This chain is Thymidylate kinase, found in Bartonella henselae (strain ATCC 49882 / DSM 28221 / CCUG 30454 / Houston 1) (Rochalimaea henselae).